Consider the following 366-residue polypeptide: Flagellar P-ring protein (366 aa).

Residues 1–19 form the signal peptide; that stretch reads MTLIRLLACLLFLPCLAQA.

The protein belongs to the FlgI family. In terms of assembly, the basal body constitutes a major portion of the flagellar organelle and consists of four rings (L,P,S, and M) mounted on a central rod.

The protein resides in the periplasm. It localises to the bacterial flagellum basal body. In terms of biological role, assembles around the rod to form the L-ring and probably protects the motor/basal body from shearing forces during rotation. In Ruegeria pomeroyi (strain ATCC 700808 / DSM 15171 / DSS-3) (Silicibacter pomeroyi), this protein is Flagellar P-ring protein.